We begin with the raw amino-acid sequence, 414 residues long: NAC domain-containing protein 35 (414 aa).

Positions 1–21 (MAIVSSTTSIIPMSNQVNNNE) are enriched in polar residues. Residues 1–47 (MAIVSSTTSIIPMSNQVNNNEKGIEDNDHRGGQESHVQNEDEADDHD) are disordered. A compositionally biased stretch (basic and acidic residues) spans 22 to 47 (KGIEDNDHRGGQESHVQNEDEADDHD). An NAC domain is found at 51–198 (VMPGFRFHPT…EISLCRVYKR (148 aa)). The DNA-binding element occupies 149–204 (IGLKKTLVFYSGKAPKGTRTSWIMNEYRLPHHETEKYQKAEISLCRVYKRPGVEDH). The disordered stretch occupies residues 200 to 251 (GVEDHPSVPRSLSTRHHNHNSSTSSRLALRQQQHHSSSSNHSDNNLNNNNNI). The span at 233–251 (HHSSSSNHSDNNLNNNNNI) shows a compositional bias: low complexity.

As to expression, expressed in aerial organs in early stages of seedling development.

It is found in the nucleus. Its function is as follows. Transcription factor that acts as a floral repressor. Controls flowering time by negatively regulating CONSTANS (CO) expression in a GIGANTEA (GI)-independent manner. Regulates the plant cold response by positive regulation of the cold response genes COR15A and KIN1. May coordinate cold response and flowering time. The sequence is that of NAC domain-containing protein 35 from Arabidopsis thaliana (Mouse-ear cress).